We begin with the raw amino-acid sequence, 335 residues long: Pharynx and intestine in excess protein 1 (335 aa).

A Glycyl lysine isopeptide (Lys-Gly) (interchain with G-Cter in SUMO) cross-link involves residue Lys68. A C3H1-type 1 zinc finger spans residues 98-126 (EYKTRLCDAFRREGYCPYNDNCTYAHGQD). A compositionally biased stretch (basic and acidic residues) spans 130–156 (VPRRRQEYYSRDPPRERRDSRSRRDDV). The disordered stretch occupies residues 130 to 188 (VPRRRQEYYSRDPPRERRDSRSRRDDVDTTINRSSSSASKHHDENRRPSNNHGSSNRRQ). Composition is skewed to polar residues over residues 158 to 167 (TTINRSSSSA) and 177 to 187 (PSNNHGSSNRR). The C3H1-type 2 zinc-finger motif lies at 184–211 (SNRRQICHNFERGNCRYGPRCRFIHVEQ). Residues 288–291 (MAPT) form a required for inhibition of Ser-2 phosphorylation region.

Interacts with hda-1, let-418 and mep-1. Interacts (via C terminus) with cit-1.1 (via C terminus). Sumoylated in adult germ cells.

Its subcellular location is the nucleus. It is found in the cytoplasm. The protein resides in the cytoskeleton. The protein localises to the microtubule organizing center. It localises to the centrosome. Its subcellular location is the spindle. It is found in the cytoplasmic granule. Its function is as follows. Maternally provided pie-1 is required for germline cell fate determination. Functions as a repressor of RNA polymerase II-dependent gene expression in the developing germline. Required for expression of nos-2 in P4 germline blastomere cells. Inhibits the histone deacetylase activity of hda-1. Represses transcriptional activation of cdk-9 and cit-1.1, which are members of the P-TEFb complex. Acts redundantly with gei-17 to promote piRNA-mediated silencing and fertility in adult germline. Promotes the sumoylation of hda-1 in adult animals but not in embryos thereby regulating its interaction with mep-1. In Caenorhabditis elegans, this protein is Pharynx and intestine in excess protein 1.